The sequence spans 449 residues: Phosphoglucosamine mutase (449 aa).

The active-site Phosphoserine intermediate is the S100. S100, D241, D243, and D245 together coordinate Mg(2+). S100 is modified (phosphoserine).

It belongs to the phosphohexose mutase family. It depends on Mg(2+) as a cofactor. Post-translationally, activated by phosphorylation.

The catalysed reaction is alpha-D-glucosamine 1-phosphate = D-glucosamine 6-phosphate. Catalyzes the conversion of glucosamine-6-phosphate to glucosamine-1-phosphate. In Caldicellulosiruptor bescii (strain ATCC BAA-1888 / DSM 6725 / KCTC 15123 / Z-1320) (Anaerocellum thermophilum), this protein is Phosphoglucosamine mutase.